The chain runs to 486 residues: MSSPSPPAPVACAAISASEKVDGFTRKSVRKAQRQKRSQGSSQFRSQGSQAELHPLPQLKDATSNEQQELFCQKLQQCCVLFDFMDSVSDLKSKEIKRATLNELVEYVSTNRGVIVESAYSDIVKMISANIFRTLPPSDNPDFDPEEDEPTLEASWPHIQLVYEFFLRFLESPDFQPSIAKRYIDQKFVQQLLELFDSEDPRERDFLKTVLHRIYGKFLGLRAFIRKQINNIFLRFIYETEHFNGVAELLEILGSIINGFALPLKAEHKQFLMKVLIPMHTAKGLALFHAQLAYCVVQFLEKDTTLTEPVIRGLLKFWPKTCSQKEVMFLGEIEEILDVIEPTQFKKIEEPLFKQISKCVSSSHFQVAERALYFWNNEYILSLIEENIDKILPIMFASLYKISKEHWNQTIVALVYNVLKTLMEMNGKLFDDLTSSYKAERQREKKKELEREELWKKLEELQLKKALEKQNNAYNMHSIRSSTSAK.

Ser2 is modified (N-acetylserine). The segment at 22–52 (DGFTRKSVRKAQRQKRSQGSSQFRSQGSQAE) is disordered. The segment covering 27–37 (KSVRKAQRQKR) has biased composition (basic residues). The span at 38-51 (SQGSSQFRSQGSQA) shows a compositional bias: low complexity. Phosphoserine occurs at positions 41, 42, and 49.

This sequence belongs to the phosphatase 2A regulatory subunit B56 family. In terms of assembly, PP2A consists of a common heterodimeric core enzyme, composed of a 36 kDa catalytic subunit (subunit C) and a 65 kDa constant regulatory subunit (PR65 or subunit A), that associates with a variety of regulatory subunits. Proteins that associate with the core dimer include three families of regulatory subunits B (the R2/B/PR55/B55, R3/B''/PR72/PR130/PR59 and R5/B'/B56 families), the 48 kDa variable regulatory subunit, viral proteins, and cell signaling molecules. Interacts with SGO1. Widely expressed with highest levels in thymus and ovary.

It is found in the cytoplasm. Its subcellular location is the nucleus. The protein resides in the chromosome. It localises to the centromere. In terms of biological role, the B regulatory subunit might modulate substrate selectivity and catalytic activity, and might also direct the localization of the catalytic enzyme to a particular subcellular compartment. The sequence is that of Serine/threonine-protein phosphatase 2A 56 kDa regulatory subunit alpha isoform (Ppp2r5a) from Mus musculus (Mouse).